Here is a 278-residue protein sequence, read N- to C-terminus: WIMGHMVNEIYQIDEFVDLGANSIETDITFDDNAMAEYSFHGVPCDCRRYCHKWEYINTFLDGLRRATTPGDSKFRKELALVVFDLKTGDLSSSTANKGGKLFGQKLLQHYWKGGNNGGRAYIILSIPDLDHYAFISGFKEALKTAGHEELLAKVGYDFSGNDDLGSTRTALNKAGVKDRERVWQSDGITNCVSTLFRGLDRVKKAVSNRDSSNGYINKVYHWTVDKYGSVRDALDAGVDGVMTNDPDVIVNVLNESKYKGKLRLATYDDNPWETFKP.

Histidine 5 is an active-site residue. Glutamate 25 and aspartate 27 together coordinate Mg(2+). Histidine 41 (nucleophile) is an active-site residue. 2 cysteine pairs are disulfide-bonded: cysteine 45-cysteine 51 and cysteine 47-cysteine 192. Aspartate 85 is a binding site for Mg(2+).

Belongs to the arthropod phospholipase D family. Class II subfamily. The cofactor is Mg(2+). As to expression, expressed by the venom gland.

The protein localises to the secreted. It carries out the reaction an N-(acyl)-sphingosylphosphocholine = an N-(acyl)-sphingosyl-1,3-cyclic phosphate + choline. It catalyses the reaction an N-(acyl)-sphingosylphosphoethanolamine = an N-(acyl)-sphingosyl-1,3-cyclic phosphate + ethanolamine. The catalysed reaction is a 1-acyl-sn-glycero-3-phosphocholine = a 1-acyl-sn-glycero-2,3-cyclic phosphate + choline. The enzyme catalyses a 1-acyl-sn-glycero-3-phosphoethanolamine = a 1-acyl-sn-glycero-2,3-cyclic phosphate + ethanolamine. Functionally, dermonecrotic toxins cleave the phosphodiester linkage between the phosphate and headgroup of certain phospholipids (sphingolipid and lysolipid substrates), forming an alcohol (often choline) and a cyclic phosphate. This toxin acts on sphingomyelin (SM). It may also act on ceramide phosphoethanolamine (CPE), lysophosphatidylcholine (LPC) and lysophosphatidylethanolamine (LPE), but not on lysophosphatidylserine (LPS), and lysophosphatidylglycerol (LPG). It acts by transphosphatidylation, releasing exclusively cyclic phosphate products as second products. Induces dermonecrosis, hemolysis, increased vascular permeability, edema, inflammatory response, and platelet aggregation. The sequence is that of Dermonecrotic toxin LhSicTox-alphaIV1ii from Loxosceles hirsuta (Recluse spider).